Here is a 399-residue protein sequence, read N- to C-terminus: F-box/kelch-repeat protein At5g48980 (399 aa).

Residues 1-11 (MADSQRLSTAS) are compositionally biased toward polar residues. Residues 1–29 (MADSQRLSTASGVKDGQPPWKKKKLSNDT) form a disordered region. Positions 29–75 (TTSNPSLPYDVILIILARVSRSYYTNLSLVSKSFRSILTSPELYKTR) constitute an F-box domain. Residues 199-248 (IVYLPGSFESPDSLNCVEVYNTMTQTWKPVPPEKRMFKLENLEKKIYYKS) form a Kelch repeat.

This Arabidopsis thaliana (Mouse-ear cress) protein is F-box/kelch-repeat protein At5g48980.